Consider the following 452-residue polypeptide: Transcription factor PERIANTHIA (452 aa).

A bZIP domain is found at 164–227; it reads DQRTLRRLAQ…RGVSADHTHL (64 aa). The interval 166 to 186 is basic motif; it reads RTLRRLAQNREAARKSRLRKK. The segment at 192–206 is leucine-zipper; the sequence is LENSRIRLAQLEEEL. The region spanning 233–449 is the DOG1 domain; sequence VFSFELEYTR…RALSSLWLAR (217 aa).

Belongs to the bZIP family. As to quaternary structure, interacts with GRXC7/ROXY1. Interacts with BOP1 and BOP2.

The protein resides in the nucleus. Its function is as follows. Transcriptional activator involved in the determination of floral organ number. Acts to determine floral organ patterning by establishing floral organ primordia in specific numbers and positions. Plays a role in regulating stem cell fate by directly controlling AG expression. Binds to the 5'-AAGAAT-3' cis-acting element found in AG promoter. Might represent a target for a post-translational modification by GRXC7/ROXY1. This is Transcription factor PERIANTHIA (PAN) from Arabidopsis thaliana (Mouse-ear cress).